The following is a 593-amino-acid chain: Kelch-like protein 2 (593 aa).

The segment at 1–28 is disordered; the sequence is METPPLPPACTKQGHQKPLDSKDDNTEK. Basic and acidic residues predominate over residues 17–28; that stretch reads KPLDSKDDNTEK. In terms of domain architecture, BTB spans 56–123; that stretch reads CDVTIVAEDM…VYTAEIQVTE (68 aa). Kelch repeat units lie at residues 308 to 353, 354 to 400, 402 to 447, 449 to 496, 497 to 543, and 545 to 591; these read LMVV…YMAG, LVFA…VLNG, LYAV…VVGG, LYAV…VLNN, LLYA…AVNG, and LYVV…VIDK.

Component of the BCR(KLHL2) E3 ubiquitin ligase complex, at least composed of CUL3 and KLHL2 and RBX1. Binds actin. Interacts with KLHL12. Interacts (via N-terminus) with FYN (via SH3 domain). In terms of tissue distribution, ubiquitous. Detected throughout the brain.

It localises to the cytoplasm. The protein localises to the cytoskeleton. The protein resides in the cell projection. Its subcellular location is the ruffle. It is found in the lamellipodium. It localises to the cytosol. The protein operates within protein modification; protein ubiquitination. In terms of biological role, substrate-specific adapter of a BCR (BTB-CUL3-RBX1) E3 ubiquitin ligase complex that mediates the ubiquitination of target proteins, such as NPTXR, WNK1, WNK3 and WNK4, leading most often to their proteasomal degradation. The BCR(KLHL2) complex catalyzes ubiquitination and degradation of NPTXR. Responsible for degradative ubiquitination of the WNK kinases WNK1, WNK3 and WNK4. Plays a role in the reorganization of the actin cytoskeleton. Promotes growth of cell projections in oligodendrocyte precursors. The protein is Kelch-like protein 2 of Homo sapiens (Human).